We begin with the raw amino-acid sequence, 506 residues long: 2,3-bisphosphoglycerate-independent phosphoglycerate mutase (506 aa).

Mn(2+) is bound by residues D13 and S63. Residue S63 is the Phosphoserine intermediate of the active site. Substrate contacts are provided by residues H124, 153–154, R183, R189, 254–257, and K330; these read RD and RADR. Residues D396, H400, D437, H438, and H456 each contribute to the Mn(2+) site.

It belongs to the BPG-independent phosphoglycerate mutase family. As to quaternary structure, monomer. Mn(2+) serves as cofactor.

It carries out the reaction (2R)-2-phosphoglycerate = (2R)-3-phosphoglycerate. Its pathway is carbohydrate degradation; glycolysis; pyruvate from D-glyceraldehyde 3-phosphate: step 3/5. In terms of biological role, catalyzes the interconversion of 2-phosphoglycerate and 3-phosphoglycerate. In Cereibacter sphaeroides (strain ATCC 17025 / ATH 2.4.3) (Rhodobacter sphaeroides), this protein is 2,3-bisphosphoglycerate-independent phosphoglycerate mutase.